The chain runs to 70 residues: Sec-independent protein translocase protein TatA (70 aa).

The chain crosses the membrane as a helical span at residues 1–21 (MGSFSIWHWLIVLVVVALLFG). Residues 45-70 (KGESEQAEDETAKPLPKERDKDSARG) are disordered.

This sequence belongs to the TatA/E family. In terms of assembly, the Tat system comprises two distinct complexes: a TatABC complex, containing multiple copies of TatA, TatB and TatC subunits, and a separate TatA complex, containing only TatA subunits. Substrates initially bind to the TatABC complex, which probably triggers association of the separate TatA complex to form the active translocon.

It localises to the cell inner membrane. In terms of biological role, part of the twin-arginine translocation (Tat) system that transports large folded proteins containing a characteristic twin-arginine motif in their signal peptide across membranes. TatA could form the protein-conducting channel of the Tat system. The protein is Sec-independent protein translocase protein TatA of Phenylobacterium zucineum (strain HLK1).